The chain runs to 26 residues: Thrombopoietin (26 aa).

Belongs to the EPO/TPO family.

The protein resides in the secreted. Lineage-specific cytokine affecting the proliferation and maturation of megakaryocytes from their committed progenitor cells. It acts at a late stage of megakaryocyte development. It may be the major physiological regulator of circulating platelets. The protein is Thrombopoietin (THPO) of Sus scrofa (Pig).